A 294-amino-acid polypeptide reads, in one-letter code: NAD kinase (294 aa).

Asp74 acts as the Proton acceptor in catalysis. Residues 74 to 75 (DG), Arg79, 149 to 150 (NE), Asp179, 190 to 195 (TGYSLS), and Ala214 contribute to the NAD(+) site.

Belongs to the NAD kinase family. A divalent metal cation is required as a cofactor.

Its subcellular location is the cytoplasm. The enzyme catalyses NAD(+) + ATP = ADP + NADP(+) + H(+). Functionally, involved in the regulation of the intracellular balance of NAD and NADP, and is a key enzyme in the biosynthesis of NADP. Catalyzes specifically the phosphorylation on 2'-hydroxyl of the adenosine moiety of NAD to yield NADP. The polypeptide is NAD kinase (Flavobacterium johnsoniae (strain ATCC 17061 / DSM 2064 / JCM 8514 / BCRC 14874 / CCUG 350202 / NBRC 14942 / NCIMB 11054 / UW101) (Cytophaga johnsonae)).